A 472-amino-acid polypeptide reads, in one-letter code: Relaxin-3 receptor 1 (472 aa).

Residues Met1–Arg81 are Extracellular-facing. Residues Asn36 and Asn40 are each glycosylated (N-linked (GlcNAc...) asparagine). A helical transmembrane segment spans residues Ile82–Val102. Topologically, residues Leu103–Leu119 are cytoplasmic. Residues Phe120–Val140 form a helical membrane-spanning segment. Residues Glu141–Lys156 are Extracellular-facing. Residues Cys155 and Cys247 are joined by a disulfide bond. A helical membrane pass occupies residues Ile157–Ser177. Residues Val178–Lys215 lie on the Cytoplasmic side of the membrane. The helical transmembrane segment at Val216 to Ser236 threads the bilayer. Residues Thr237–Gln270 are Extracellular-facing. A helical transmembrane segment spans residues Lys271–Val291. Residues Arg292–Arg298 lie on the Cytoplasmic side of the membrane. Residues Val299 to Ala319 form a helical membrane-spanning segment. Residues Ser320 to Thr332 lie on the Extracellular side of the membrane. Residues Ile333–Ile353 traverse the membrane as a helical segment. Over Leu354 to Tyr472 the chain is Cytoplasmic.

Belongs to the G-protein coupled receptor 1 family.

The protein localises to the cell membrane. In terms of biological role, receptor for RNL3/relaxin-3. Binding of the ligand inhibit cAMP accumulation. The protein is Relaxin-3 receptor 1 (Rxfp3) of Mus musculus (Mouse).